The following is a 288-amino-acid chain: 33 kDa chaperonin (288 aa).

2 disulfide bridges follow: C235/C237 and C268/C271.

Belongs to the HSP33 family. Under oxidizing conditions two disulfide bonds are formed involving the reactive cysteines. Under reducing conditions zinc is bound to the reactive cysteines and the protein is inactive.

It localises to the cytoplasm. Its function is as follows. Redox regulated molecular chaperone. Protects both thermally unfolding and oxidatively damaged proteins from irreversible aggregation. Plays an important role in the bacterial defense system toward oxidative stress. The chain is 33 kDa chaperonin from Streptococcus thermophilus (strain ATCC BAA-491 / LMD-9).